Here is a 2381-residue protein sequence, read N- to C-terminus: Myb-like protein U (2381 aa).

Disordered stretches follow at residues 1–85, 148–167, 178–492, and 641–696; these read MKTK…TSNN, SSSG…GGIS, PTIP…NNNN, and NINN…GDEM. Low complexity-rich tracts occupy residues 30-41 and 64-79; these read SKSSSKVSQSSS and TIPA…PTLT. Low complexity-rich tracts occupy residues 192 to 204, 225 to 261, and 291 to 315; these read NLSS…NILS, ENVN…SSSS, and SNKS…NNKK. Residues 331 to 343 are compositionally biased toward acidic residues; the sequence is SEYDSSDSSDMDL. A compositionally biased stretch (low complexity) spans 363 to 405; sequence TTKPNNSNSNNNNNNNSINSTIPASNNINSANNSKTTNKNITS. Polar residues predominate over residues 421–430; it reads SETPILTSVK. Composition is skewed to low complexity over residues 435 to 492 and 641 to 692; these read QQIP…NNNN and NINN…NNNN. Residues 856 to 899 form the Myb-like domain; sequence WHEEEKLLFRELFCAYGRDWQMVSTLMCGTKSPTQIKNFYYDVR. 10 disordered regions span residues 932 to 1024, 1068 to 1093, 1145 to 1207, 1295 to 1339, 1422 to 1474, 1597 to 1647, 1667 to 1849, 1961 to 1985, 2055 to 2106, and 2122 to 2280; these read KPEQ…ETPP, INQS…NINP, TSST…SNQE, STTT…PPID, PYYP…LSTP, PPAT…TTIV, PIVK…PPPV, TTVP…NGLA, TSTV…NGLT, and LSGI…NKND. A compositionally biased stretch (low complexity) spans 936-953; sequence NVNSNNNNNGGGNSLKDG. A compositionally biased stretch (basic residues) spans 982-995; that stretch reads VKKKSRTASKRSFR. A compositionally biased stretch (polar residues) spans 1000 to 1013; sequence ANETNRTPKNQPKP. 4 stretches are compositionally biased toward low complexity: residues 1069–1092, 1145–1186, 1195–1205, and 1306–1325; these read NQSS…NNIN, TSST…TGSA, VNNNNNNNLSN, and TTTP…QLQQ. The span at 1326–1337 shows a compositional bias: pro residues; it reads LPPPPPPPPKPP. Positions 1427 to 1474 are enriched in low complexity; that stretch reads PSSTTTNSATSTPTSTPTSTPSTSASTLTPTSTPTSTPVPAPTSLSTP. Residues 1597–1606 show a composition bias toward pro residues; it reads PPATITPILP. A compositionally biased stretch (low complexity) spans 1618-1637; sequence SSSSSSSSSSSSSSSSSSSS. 2 stretches are compositionally biased toward polar residues: residues 1638–1647 and 1671–1701; these read TTKNNSTTIV and QESN…KTLL. Low complexity-rich tracts occupy residues 1702–1735 and 1743–1809; these read PSNS…NPSS and TSNK…TLKP. Polar residues predominate over residues 1829 to 1844; it reads APTNSTNQNTIPNATT. Low complexity-rich tracts occupy residues 1961–1970 and 2065–2097; these read TTVPGTTTTT and NNMT…QQST. Polar residues predominate over residues 2129–2138; the sequence is NTLSGKSPTP. The span at 2154–2209 shows a compositional bias: low complexity; the sequence is PSLSSSSANPISITNNTTSLSQQSNTTNTMPSTVSLSSGSTSINSNSSNSKSLRSP. Positions 2210–2278 are enriched in basic and acidic residues; the sequence is KSSDNDGKES…NNNDKFDSNK (69 aa).

This chain is Myb-like protein U (mybU), found in Dictyostelium discoideum (Social amoeba).